Reading from the N-terminus, the 333-residue chain is Phenylalanine--tRNA ligase alpha subunit (333 aa).

Glu248 contributes to the Mg(2+) binding site.

The protein belongs to the class-II aminoacyl-tRNA synthetase family. Phe-tRNA synthetase alpha subunit type 1 subfamily. As to quaternary structure, tetramer of two alpha and two beta subunits. It depends on Mg(2+) as a cofactor.

It localises to the cytoplasm. It carries out the reaction tRNA(Phe) + L-phenylalanine + ATP = L-phenylalanyl-tRNA(Phe) + AMP + diphosphate + H(+). This Ureaplasma urealyticum serovar 10 (strain ATCC 33699 / Western) protein is Phenylalanine--tRNA ligase alpha subunit.